The chain runs to 427 residues: Thymidine phosphorylase (427 aa).

It belongs to the thymidine/pyrimidine-nucleoside phosphorylase family. Homodimer.

The enzyme catalyses thymidine + phosphate = 2-deoxy-alpha-D-ribose 1-phosphate + thymine. The enzymes which catalyze the reversible phosphorolysis of pyrimidine nucleosides are involved in the degradation of these compounds and in their utilization as carbon and energy sources, or in the rescue of pyrimidine bases for nucleotide synthesis. This is Thymidine phosphorylase (deoA) from Mycobacterium tuberculosis (strain CDC 1551 / Oshkosh).